The primary structure comprises 215 residues: Putative glycosyltransferase ALG1L2 (215 aa).

Positions 40 to 66 are disordered; sequence PFRARSEPEDPDTERSAFTERDSGSGL. Over residues 43 to 62 the composition is skewed to basic and acidic residues; sequence ARSEPEDPDTERSAFTERDS.

This sequence belongs to the glycosyltransferase group 1 family.

Functionally, putative glycosyltransferase. The polypeptide is Putative glycosyltransferase ALG1L2 (ALG1L2) (Homo sapiens (Human)).